A 159-amino-acid polypeptide reads, in one-letter code: Nucleotide-binding protein Avin_13410 (159 aa).

This sequence belongs to the YajQ family.

In terms of biological role, nucleotide-binding protein. The chain is Nucleotide-binding protein Avin_13410 from Azotobacter vinelandii (strain DJ / ATCC BAA-1303).